Reading from the N-terminus, the 262-residue chain is Glucosamine-6-phosphate deaminase (262 aa).

The active-site Proton acceptor; for enolization step is the D63. N129 acts as the For ring-opening step in catalysis. H131 acts as the Proton acceptor; for ring-opening step in catalysis. Catalysis depends on E136, which acts as the For ring-opening step.

Belongs to the glucosamine/galactosamine-6-phosphate isomerase family. NagB subfamily.

It carries out the reaction alpha-D-glucosamine 6-phosphate + H2O = beta-D-fructose 6-phosphate + NH4(+). It functions in the pathway amino-sugar metabolism; N-acetylneuraminate degradation; D-fructose 6-phosphate from N-acetylneuraminate: step 5/5. Its function is as follows. Catalyzes the reversible isomerization-deamination of glucosamine 6-phosphate (GlcN6P) to form fructose 6-phosphate (Fru6P) and ammonium ion. In Bacillus cereus (strain ZK / E33L), this protein is Glucosamine-6-phosphate deaminase.